The primary structure comprises 472 residues: Peptidoglycan endopeptidase RipA (472 aa).

Positions 1-39 (MRRNRRGSPARPAARFVRPAIPSALSVALLVCTPGLATA) form a signal peptide, tat-type signal. A NlpC/P60 domain is found at 340-472 (RQASEYVIRR…TPYVVRYIEY (133 aa)). C383 serves as the catalytic Nucleophile. Residue H432 is the Proton acceptor of the active site. E444 is an active-site residue.

The protein belongs to the peptidase C40 family. As to quaternary structure, monomer. Interacts with RpfB and PBP1A (ponA1) via residues 448-472 of RipA, interacts with RpfE. Interacts with the chaperone MoxR1. RipA-MoxR1 interaction in the cytoplasm leads to proper folding of RipA, resulting in its secretion. Also interacts with Mce2B. Exported by the Tat system. The position of the signal peptide cleavage has not been experimentally proven.

It is found in the secreted. Its activity is regulated as follows. MoxR1-mediated folding is critical for secretion via the TAT system. The synergistic effects on peptidoglycan degradation of RipA plus RpfB are inhibited by addition of PBP1A (ponA1). In terms of biological role, peptidoglycan endopeptidase that cleaves the bond between D-glutamate and meso-diaminopimelate. Binds and degrades high-molecular weight peptidoglycan from a number of Actinobacteria; activity is increased in the presence of RpfB and inhibited by PBP1A (ponA1). Required for normal separation of daughter cells after cell division and for cell wall integrity. Required for host cell invasion and intracellular survival in host macrophages. The sequence is that of Peptidoglycan endopeptidase RipA (ripA) from Mycobacterium tuberculosis (strain ATCC 25618 / H37Rv).